The following is a 247-amino-acid chain: ATP synthase subunit a (247 aa).

6 helical membrane passes run 26–46 (ITNN…LFYV), 85–105 (YFPL…IGLL), 115–135 (IIFT…INFF), 141–161 (FFNL…LVVI), 178–198 (FANM…IFNV), and 205–225 (ISFL…CIAI).

It belongs to the ATPase A chain family. In terms of assembly, F-type ATPases have 2 components, CF(1) - the catalytic core - and CF(0) - the membrane proton channel. CF(1) has five subunits: alpha(3), beta(3), gamma(1), delta(1), epsilon(1). CF(0) has three main subunits: a, b and c.

It is found in the mitochondrion inner membrane. Functionally, mitochondrial membrane ATP synthase (F(1)F(0) ATP synthase or Complex V) produces ATP from ADP in the presence of a proton gradient across the membrane which is generated by electron transport complexes of the respiratory chain. F-type ATPases consist of two structural domains, F(1) - containing the extramembraneous catalytic core and F(0) - containing the membrane proton channel, linked together by a central stalk and a peripheral stalk. During catalysis, ATP synthesis in the catalytic domain of F(1) is coupled via a rotary mechanism of the central stalk subunits to proton translocation. Key component of the proton channel; it may play a direct role in the translocation of protons across the membrane. The polypeptide is ATP synthase subunit a (ATP6) (Acanthamoeba castellanii (Amoeba)).